The chain runs to 199 residues: Shikimate kinase (199 aa).

Residue 32-37 (GSGKTS) coordinates ATP. A Mg(2+)-binding site is contributed by Thr-36. Substrate-binding residues include Asp-54, Arg-78, and Gly-100. Residue Arg-138 coordinates ATP. Arg-157 provides a ligand contact to substrate.

This sequence belongs to the shikimate kinase family. As to quaternary structure, monomer. The cofactor is Mg(2+).

Its subcellular location is the cytoplasm. The enzyme catalyses shikimate + ATP = 3-phosphoshikimate + ADP + H(+). Its pathway is metabolic intermediate biosynthesis; chorismate biosynthesis; chorismate from D-erythrose 4-phosphate and phosphoenolpyruvate: step 5/7. Its function is as follows. Catalyzes the specific phosphorylation of the 3-hydroxyl group of shikimic acid using ATP as a cosubstrate. This is Shikimate kinase from Synechococcus sp. (strain CC9605).